The following is a 492-amino-acid chain: Probable cytochrome P450 313a3 (492 aa).

A heme-binding site is contributed by Cys438.

This sequence belongs to the cytochrome P450 family. The cofactor is heme.

The protein localises to the endoplasmic reticulum membrane. The protein resides in the microsome membrane. Its function is as follows. May be involved in the metabolism of insect hormones and in the breakdown of synthetic insecticides. This is Probable cytochrome P450 313a3 (Cyp313a3) from Drosophila melanogaster (Fruit fly).